The chain runs to 139 residues: Actin-depolymerizing factor 2 (139 aa).

The 133-residue stretch at 7-139 folds into the ADF-H domain; it reads GLAVSDECKV…SLDIVKSRTN (133 aa).

The protein belongs to the actin-binding proteins ADF family. As to expression, expressed in pollen.

Actin-depolymerizing protein. Severs actin filaments (F-actin) and binds to actin monomers. The sequence is that of Actin-depolymerizing factor 2 (ADF2) from Zea mays (Maize).